Here is a 365-residue protein sequence, read N- to C-terminus: Putative glutamate--cysteine ligase 2-3 (365 aa).

This sequence belongs to the glutamate--cysteine ligase type 2 family. YbdK subfamily.

It carries out the reaction L-cysteine + L-glutamate + ATP = gamma-L-glutamyl-L-cysteine + ADP + phosphate + H(+). Its function is as follows. ATP-dependent carboxylate-amine ligase which exhibits weak glutamate--cysteine ligase activity. In Mycolicibacterium smegmatis (strain ATCC 700084 / mc(2)155) (Mycobacterium smegmatis), this protein is Putative glutamate--cysteine ligase 2-3.